We begin with the raw amino-acid sequence, 287 residues long: 3-methyl-2-oxobutanoate hydroxymethyltransferase (287 aa).

Mg(2+) is bound by residues aspartate 67 and aspartate 106. Residues aspartate 67–serine 68, aspartate 106, and lysine 136 each bind 3-methyl-2-oxobutanoate. Glutamate 138 contacts Mg(2+). The Proton acceptor role is filled by glutamate 204.

This sequence belongs to the PanB family. As to quaternary structure, homodecamer; pentamer of dimers. The cofactor is Mg(2+).

It is found in the cytoplasm. The catalysed reaction is 3-methyl-2-oxobutanoate + (6R)-5,10-methylene-5,6,7,8-tetrahydrofolate + H2O = 2-dehydropantoate + (6S)-5,6,7,8-tetrahydrofolate. Its pathway is cofactor biosynthesis; (R)-pantothenate biosynthesis; (R)-pantoate from 3-methyl-2-oxobutanoate: step 1/2. In terms of biological role, catalyzes the reversible reaction in which hydroxymethyl group from 5,10-methylenetetrahydrofolate is transferred onto alpha-ketoisovalerate to form ketopantoate. In Streptomyces avermitilis (strain ATCC 31267 / DSM 46492 / JCM 5070 / NBRC 14893 / NCIMB 12804 / NRRL 8165 / MA-4680), this protein is 3-methyl-2-oxobutanoate hydroxymethyltransferase.